Reading from the N-terminus, the 373-residue chain is Glutamate 5-kinase (373 aa).

Residue Lys16 coordinates ATP. Residues Ser56, Asp143, and Asn155 each coordinate substrate. 175-176 (TD) is a binding site for ATP. The region spanning 281–359 (RGRLTLDDGA…SRIDSLLGYK (79 aa)) is the PUA domain.

The protein belongs to the glutamate 5-kinase family.

The protein localises to the cytoplasm. The enzyme catalyses L-glutamate + ATP = L-glutamyl 5-phosphate + ADP. It functions in the pathway amino-acid biosynthesis; L-proline biosynthesis; L-glutamate 5-semialdehyde from L-glutamate: step 1/2. Catalyzes the transfer of a phosphate group to glutamate to form L-glutamate 5-phosphate. The protein is Glutamate 5-kinase of Saccharophagus degradans (strain 2-40 / ATCC 43961 / DSM 17024).